The sequence spans 165 residues: Nicotine 6-hydroxylase small subunit (165 aa).

Positions 10 to 86 (VEIDVEVNGR…GRSIRTVEDL (77 aa)) constitute a 2Fe-2S ferredoxin-type domain. [2Fe-2S] cluster contacts are provided by cysteine 48, cysteine 53, cysteine 56, and cysteine 68.

As to quaternary structure, heterotrimer composed of a large subunit (NdhL), a medium subunit (NdhM) and a small subunit (NdhS). It depends on [2Fe-2S] cluster as a cofactor.

Its subcellular location is the cytoplasm. The enzyme catalyses (R)-nicotine + A + H2O = (R)-6-hydroxynicotine + AH2. It carries out the reaction (S)-nicotine + A + H2O = (S)-6-hydroxynicotine + AH2. The protein operates within alkaloid degradation; nicotine degradation; 6-hydroxypseudooxynicotine from nicotine (R-isomer route): step 1/2. It functions in the pathway alkaloid degradation; nicotine degradation; 6-hydroxypseudooxynicotine from nicotine (S-isomer route): step 1/2. With respect to regulation, nicotine dehydrogenase activity is inhibited by tungsten. Component of the nicotine 6-hydroxylase, which is involved in the degradation of nicotine. Catalyzes the hydroxylation of the pyridine ring at C6 to form 6-hydroxynicotine. Can use both L-nicotine and D-nicotine. In Paenarthrobacter nicotinovorans (Arthrobacter nicotinovorans), this protein is Nicotine 6-hydroxylase small subunit.